The primary structure comprises 277 residues: MSLPLLAVKPRTLDQRVVSYEVPAEDDPVIYRLTDATDAAAVDALIWAAYRQIFSEHLILASYRQPFLESQLRNRAISVRDFIRGLGKSEVYREQVAAVNSNYRLVDISFKRFLGRPTYGQQEQIAWSIILATRGLEGFIDALVDSDEYQQNFGADIVPYQRRRRMARPFNLVNPRYSDYWRNKEISLSGRSYYQARYYASGPLDKQIVRGAIPANFLSMARSIVVPTLDTQRHVARATSSLVKVPNTAQERDLPPTPVKPVPVALPYRYLPSQPKV.

The region spanning 11-189 (RTLDQRVVSY…YWRNKEISLS (179 aa)) is the PBS-linker domain.

Belongs to the phycobilisome linker protein family. The phycobilisome is a hemidiscoidal structure that is composed of two distinct substructures: a core complex and a number of rods radiating from the core.

The protein resides in the cellular thylakoid membrane. In terms of biological role, rod-core linker protein required for attachment of phycocyanin to allophycocyanin in cores of phycobilisomes. Linker polypeptides determine the state of aggregation and the location of the disk-shaped phycobiliprotein units within the phycobilisome and modulate their spectroscopic properties in order to mediate a directed and optimal energy transfer. The protein is Phycobilisome rod-core linker polypeptide CpcG1 (cpcG1) of Thermosynechococcus vestitus (strain NIES-2133 / IAM M-273 / BP-1).